The following is a 216-amino-acid chain: Probable nicotinate-nucleotide adenylyltransferase (216 aa).

The protein belongs to the NadD family.

The enzyme catalyses nicotinate beta-D-ribonucleotide + ATP + H(+) = deamido-NAD(+) + diphosphate. It participates in cofactor biosynthesis; NAD(+) biosynthesis; deamido-NAD(+) from nicotinate D-ribonucleotide: step 1/1. Its function is as follows. Catalyzes the reversible adenylation of nicotinate mononucleotide (NaMN) to nicotinic acid adenine dinucleotide (NaAD). This is Probable nicotinate-nucleotide adenylyltransferase from Buchnera aphidicola subsp. Schizaphis graminum (strain Sg).